Reading from the N-terminus, the 486-residue chain is Malonate-semialdehyde dehydrogenase 1 (486 aa).

The NAD(+) site is built by Phe154, Lys178, Glu181, Arg182, and Ser231. The active-site Nucleophile is the Cys286. An NAD(+)-binding site is contributed by Glu386.

It belongs to the aldehyde dehydrogenase family. IolA subfamily. In terms of assembly, homotetramer.

It carries out the reaction 3-oxopropanoate + NAD(+) + CoA + H2O = hydrogencarbonate + acetyl-CoA + NADH + H(+). It catalyses the reaction 2-methyl-3-oxopropanoate + NAD(+) + CoA + H2O = propanoyl-CoA + hydrogencarbonate + NADH + H(+). The protein operates within polyol metabolism; myo-inositol degradation into acetyl-CoA; acetyl-CoA from myo-inositol: step 7/7. Its function is as follows. Catalyzes the oxidation of malonate semialdehyde (MSA) and methylmalonate semialdehyde (MMSA) into acetyl-CoA and propanoyl-CoA, respectively. Is involved in a myo-inositol catabolic pathway. Bicarbonate, and not CO2, is the end-product of the enzymatic reaction. This chain is Malonate-semialdehyde dehydrogenase 1, found in Bacillus anthracis.